Here is a 1715-residue protein sequence, read N- to C-terminus: Rho guanine nucleotide exchange factor TIAM2 (1715 aa).

Polar residues-rich tracts occupy residues 1 to 22 and 218 to 229; these read MGNS…TVTG and GSPSSQRPSPTD. Disordered stretches follow at residues 1–27, 174–249, 263–294, and 385–418; these read MGNS…KQKP, FHNG…WYDS, SFLA…SSLS, and TGSL…NAEG. A lipid anchor (N-myristoyl glycine) is attached at Gly2. Over residues 235–245 the composition is skewed to low complexity; that stretch reads SKGSSLSSESS. Basic and acidic residues predominate over residues 395 to 411; sequence LQEPRSMEGSEYFDSHS. Residues 504-618 enclose the PH 1 domain; sequence VVRKAGWLFF…WVTAIHSACA (115 aa). The stretch at 665-692 forms a coiled coil; the sequence is PKNRKAIENQIRQWEQNLEKFHMDLFRM. The RBD domain maps to 831–902; sequence VQTYVHFQDN…YMQEQVYDEI (72 aa). Residues 911–997 enclose the PDZ domain; sequence DVQLTKTGDM…GLTLVARPVT (87 aa). The interval 1092 to 1113 is disordered; that stretch reads THTNSMEAPTESHDPPPRPLAR. One can recognise a DH domain in the interval 1120–1314; that stretch reads RLRKVIQELV…EKVASHINEM (195 aa). Residues 1347 to 1478 form the PH 2 domain; that stretch reads LLMHSTVSWL…KVIRSILREN (132 aa). Residues 1515–1582 are disordered; that stretch reads SLKGLRTSSS…EGLAEFPDGL (68 aa). Low complexity predominate over residues 1522-1532; the sequence is SSSSEWPSEPS. Residues 1533–1552 are compositionally biased toward polar residues; that stretch reads KGNSLDSDECSLSSGTQSSG. Basic and acidic residues predominate over residues 1557 to 1572; sequence ESRRDSKSTELEKDAQ. Ser1604 bears the Phosphoserine mark. Thr1662 is subject to Phosphothreonine.

This sequence belongs to the TIAM family. As to quaternary structure, interacts with MAP1A, MAP1B, PARP1 and YWHAE. Interacts with CD44, PARD3 and MAPK8IP2. Phosphorylated on serine and threonine residues. Phosphorylated on Thr-1662 by Rho-kinase. Its phosphorylation by Rho-kinase inhibits its guanine nucleotide exchange activity, its interaction with MAP1A, MAP1B, PARP1 and YWHAE and reduces its ability to promote neurite growth. In terms of tissue distribution, expressed in fetal brain (at protein level). Expressed in the olfactory bulb, cortical plate of the cerebral cortex, caudate putamen, hippocampus, ependymal cells of the lateral surface of the lateral ventricles of the brain. Weakly expressed in heart, lung, liver, skeletal muscle, kidney and testis.

It localises to the cytoplasm. The protein localises to the cell projection. It is found in the lamellipodium. Its subcellular location is the filopodium. The protein resides in the growth cone. It localises to the neuron projection. The protein localises to the perikaryon. In terms of biological role, modulates the activity of RHO-like proteins and connects extracellular signals to cytoskeletal activities. Acts as a GDP-dissociation stimulator protein that stimulates the GDP-GTP exchange activity of RHO-like GTPases and activates them. Activates specifically RAC1, but not CDC42 and RHOA. Mediates extracellular laminin signals to activate Rac1, contributing to neurite growth. Involved in lamellipodial formation and advancement of the growth cone of embryonic hippocampal neurons. Promotes migration of neurons in the cerebral cortex. When overexpressed, induces membrane ruffling accompanied by the accumulation of actin filaments along the altered plasma membrane. In Mus musculus (Mouse), this protein is Rho guanine nucleotide exchange factor TIAM2.